The sequence spans 392 residues: Phosphoglycerate kinase (392 aa).

Substrate contacts are provided by residues 21 to 23 (DFN), R36, 59 to 62 (HLGR), R118, and R151. ATP-binding positions include K201, G292, E323, and 349–352 (GGDS).

This sequence belongs to the phosphoglycerate kinase family. As to quaternary structure, monomer.

It is found in the cytoplasm. It catalyses the reaction (2R)-3-phosphoglycerate + ATP = (2R)-3-phospho-glyceroyl phosphate + ADP. It participates in carbohydrate degradation; glycolysis; pyruvate from D-glyceraldehyde 3-phosphate: step 2/5. This Borrelia turicatae (strain 91E135) protein is Phosphoglycerate kinase.